The sequence spans 579 residues: Glucans biosynthesis protein G (579 aa).

The first 37 residues, 1–37 (MIVSPHKASRIPGNRLRKALMASAALVGLMSAGQLWA), serve as a signal peptide directing secretion. Residues 516–579 (AKPAEEAKHD…TWSYQLPADE (64 aa)) are disordered. The segment covering 517–539 (KPAEEAKHDKTAAKHGKAEKAAK) has biased composition (basic and acidic residues).

This sequence belongs to the OpgD/OpgG family.

The protein resides in the periplasm. It participates in glycan metabolism; osmoregulated periplasmic glucan (OPG) biosynthesis. Its function is as follows. Involved in the biosynthesis of osmoregulated periplasmic glucans (OPGs). The sequence is that of Glucans biosynthesis protein G from Pseudomonas putida (strain W619).